A 457-amino-acid chain; its full sequence is Argininosuccinate lyase (457 aa).

It belongs to the lyase 1 family. Argininosuccinate lyase subfamily.

The protein localises to the cytoplasm. The enzyme catalyses 2-(N(omega)-L-arginino)succinate = fumarate + L-arginine. It functions in the pathway amino-acid biosynthesis; L-arginine biosynthesis; L-arginine from L-ornithine and carbamoyl phosphate: step 3/3. This is Argininosuccinate lyase from Escherichia fergusonii (strain ATCC 35469 / DSM 13698 / CCUG 18766 / IAM 14443 / JCM 21226 / LMG 7866 / NBRC 102419 / NCTC 12128 / CDC 0568-73).